Here is a 257-residue protein sequence, read N- to C-terminus: Triosephosphate isomerase (257 aa).

Substrate-binding residues include Asn12 and Lys14. His98 (electrophile) is an active-site residue. Glu169 functions as the Proton acceptor in the catalytic mechanism.

The protein belongs to the triosephosphate isomerase family. Homodimer.

The catalysed reaction is D-glyceraldehyde 3-phosphate = dihydroxyacetone phosphate. Its pathway is carbohydrate biosynthesis; gluconeogenesis. It functions in the pathway carbohydrate degradation; glycolysis; D-glyceraldehyde 3-phosphate from glycerone phosphate: step 1/1. This chain is Triosephosphate isomerase (tpiA), found in Dictyostelium discoideum (Social amoeba).